A 280-amino-acid polypeptide reads, in one-letter code: Sulfur carrier protein FdhD (280 aa).

Catalysis depends on Cys121, which acts as the Cysteine persulfide intermediate. Residue 258–263 (FSRPGR) coordinates Mo-bis(molybdopterin guanine dinucleotide).

The protein belongs to the FdhD family.

Its subcellular location is the cytoplasm. Its function is as follows. Required for formate dehydrogenase (FDH) activity. Acts as a sulfur carrier protein that transfers sulfur from IscS to the molybdenum cofactor prior to its insertion into FDH. This is Sulfur carrier protein FdhD from Cronobacter sakazakii (strain ATCC BAA-894) (Enterobacter sakazakii).